The primary structure comprises 387 residues: Pepsin II-1 (387 aa).

The signal sequence occupies residues 1–15; sequence MKWLLLLGLLALSEC. A propeptide spans 16-59 (activation peptide); it reads IVHKVPLVRKKSLRKNLIEKGLLQDYLKTHTPNLATKYFPKETF. The region spanning 75–384 is the Peptidase A1 domain; that stretch reads YFGTISIGTP…DRANNQVGLA (310 aa). Asp93 is an active-site residue. Cys106 and Cys111 are joined by a disulfide. A Phosphoserine modification is found at Ser129. Cys267 and Cys271 form a disulfide bridge. Asp276 is an active-site residue. A disulfide bridge links Cys310 with Cys343.

Belongs to the peptidase A1 family.

It is found in the secreted. It carries out the reaction Preferential cleavage: hydrophobic, preferably aromatic, residues in P1 and P1' positions. Cleaves 1-Phe-|-Val-2, 4-Gln-|-His-5, 13-Glu-|-Ala-14, 14-Ala-|-Leu-15, 15-Leu-|-Tyr-16, 16-Tyr-|-Leu-17, 23-Gly-|-Phe-24, 24-Phe-|-Phe-25 and 25-Phe-|-Tyr-26 bonds in the B chain of insulin.. Its function is as follows. Shows particularly broad specificity; although bonds involving phenylalanine and leucine are preferred, many others are also cleaved to some extent. In Oryctolagus cuniculus (Rabbit), this protein is Pepsin II-1.